We begin with the raw amino-acid sequence, 609 residues long: Glutamine--fructose-6-phosphate aminotransferase [isomerizing] (609 aa).

Cysteine 2 acts as the Nucleophile; for GATase activity in catalysis. The region spanning 2-219 is the Glutamine amidotransferase type-2 domain; the sequence is CGIVAAVTQR…EGDIAIVARK (218 aa). SIS domains follow at residues 288-428 and 460-599; these read ENNI…SKKE and MANT…IDQP. Lysine 604 serves as the catalytic For Fru-6P isomerization activity.

As to quaternary structure, homodimer.

The protein localises to the cytoplasm. It carries out the reaction D-fructose 6-phosphate + L-glutamine = D-glucosamine 6-phosphate + L-glutamate. In terms of biological role, catalyzes the first step in hexosamine metabolism, converting fructose-6P into glucosamine-6P using glutamine as a nitrogen source. This chain is Glutamine--fructose-6-phosphate aminotransferase [isomerizing], found in Buchnera aphidicola subsp. Acyrthosiphon pisum (strain APS) (Acyrthosiphon pisum symbiotic bacterium).